Here is a 138-residue protein sequence, read N- to C-terminus: Thyrotropin subunit beta (138 aa).

The N-terminal stretch at 1 to 20 is a signal peptide; that stretch reads MTALFLMSMLFGLTCGQAMS. 6 disulfide bridges follow: Cys-22-Cys-72, Cys-36-Cys-87, Cys-39-Cys-125, Cys-47-Cys-103, Cys-51-Cys-105, and Cys-108-Cys-115. Asn-43 carries N-linked (GlcNAc...) asparagine glycosylation. A propeptide spanning residues 133–138 is cleaved from the precursor; the sequence is LVGFSV.

It belongs to the glycoprotein hormones subunit beta family. In terms of assembly, heterodimer of a common alpha chain and a unique beta chain which confers biological specificity to thyrotropin, lutropin, follitropin and gonadotropin.

Its subcellular location is the secreted. Its function is as follows. Indispensable for the control of thyroid structure and metabolism. In Homo sapiens (Human), this protein is Thyrotropin subunit beta (TSHB).